The following is a 360-amino-acid chain: 3-dehydroquinate synthase (360 aa).

NAD(+)-binding positions include Gly-105–Asp-109, Thr-129–Thr-130, Lys-142, Lys-151, and Thr-169–Thr-172. Zn(2+) is bound by residues Glu-184, His-247, and His-263.

The protein belongs to the sugar phosphate cyclases superfamily. Dehydroquinate synthase family. Co(2+) is required as a cofactor. It depends on Zn(2+) as a cofactor. The cofactor is NAD(+).

The protein localises to the cytoplasm. The catalysed reaction is 7-phospho-2-dehydro-3-deoxy-D-arabino-heptonate = 3-dehydroquinate + phosphate. The protein operates within metabolic intermediate biosynthesis; chorismate biosynthesis; chorismate from D-erythrose 4-phosphate and phosphoenolpyruvate: step 2/7. Functionally, catalyzes the conversion of 3-deoxy-D-arabino-heptulosonate 7-phosphate (DAHP) to dehydroquinate (DHQ). In Acetivibrio thermocellus (strain ATCC 27405 / DSM 1237 / JCM 9322 / NBRC 103400 / NCIMB 10682 / NRRL B-4536 / VPI 7372) (Clostridium thermocellum), this protein is 3-dehydroquinate synthase.